We begin with the raw amino-acid sequence, 435 residues long: Nuclear hormone receptor family member nhr-14 (435 aa).

Positions 17–92 form a DNA-binding region, nuclear receptor; sequence ADFCVVCGDK…DGMKPEAIQN (76 aa). NR C4-type zinc fingers lie at residues 20-40 and 56-80; these read CVVC…CNGC and CRFN…FQKC. A disordered region spans residues 91-126; that stretch reads QNERDRIGSTKRRKRSGANSENNSDSEGTPSPKIEV. Residues 107–119 show a composition bias toward polar residues; sequence GANSENNSDSEGT. The NR LBD domain maps to 131–355; sequence VSRKLIEMLL…KRDTISPKIE (225 aa).

This sequence belongs to the nuclear hormone receptor family. In terms of tissue distribution, expressed in intestine and head neurons in young adults.

Its subcellular location is the nucleus. Functionally, orphan nuclear receptor. Transcriptional repressor of intestinal metal transporter smf-3 and genes of the innate immune response. Inhibits nuclear localization of transcription factor pqm-1; in response to pathogen stress, may facilitate translocation of pqm-1, leading to transcriptional activation of genes involved in innate immunity and iron uptake. This Caenorhabditis elegans protein is Nuclear hormone receptor family member nhr-14 (nhr-14).